A 463-amino-acid chain; its full sequence is tRNA (guanine(10)-N(2))-methyltransferase TRMT11 (463 aa).

Position 2 is an N-acetylalanine (Ala2).

The protein belongs to the class I-like SAM-binding methyltransferase superfamily. TRM11 methyltransferase family. Part of the heterodimeric TRMT11-TRM112 methyltransferase complex; this complex forms an active tRNA methyltransferase, where TRMT112 acts as an activator of the catalytic subunit TRMT11.

The protein localises to the cytoplasm. It carries out the reaction guanosine(10) in tRNA + S-adenosyl-L-methionine = N(2)-methylguanosine(10) in tRNA + S-adenosyl-L-homocysteine + H(+). Functionally, catalytic subunit of the TRMT11-TRM112 methyltransferase complex, that specifically mediates the S-adenosyl-L-methionine-dependent N(2)-methylation of guanosine nucleotide at position 10 (m2G10) in tRNAs. This is one of the major tRNA (guanine-N(2))-methyltransferases. In Rattus norvegicus (Rat), this protein is tRNA (guanine(10)-N(2))-methyltransferase TRMT11.